A 315-amino-acid chain; its full sequence is Outer membrane protease OmpP (315 aa).

An N-terminal signal peptide occupies residues 1–23 (MQTKLLAIMLAAPVVFSSQEASA). Active-site residues include Asp-103, Asp-105, Asp-230, and His-232.

Belongs to the peptidase A26 family.

It localises to the cell outer membrane. Functionally, protease; also acts as a receptor for bacteriophage Ox2. The polypeptide is Outer membrane protease OmpP (ompP) (Escherichia coli (strain K12)).